A 349-amino-acid chain; its full sequence is KH domain-containing, RNA-binding, signal transduction-associated protein 2 (349 aa).

A KH domain is found at 65–135 (LIPVKQYPKF…HLSDELHVLI (71 aa)). Disordered regions lie at residues 181-263 (SEES…PPPA) and 320-349 (EEWT…YGRY). Positions 218–231 (RGVLTPRGTTVTRG) are enriched in low complexity. R230 and R240 each carry omega-N-methylarginine. Residues 340 to 349 (GYREHPYGRY) show a composition bias toward basic and acidic residues.

The protein belongs to the KHDRBS family. In terms of assembly, self-associates to form homooligomers. Interacts with SAFB, SFRS9 and YTHDC1. Found in a complex with KHDRBS1, KHDRBS2 and KHDRBS3. Interacts with RBMX. Interacts with the SH3 domains of FYN and PLCG1. Interacts with the SH2 domains of FYN, GRAP2, PLCG1 and RASA1. Interacts with RBMX. Methylated. In terms of processing, phosphorylated on tyrosine residues by FYN. Tyrosine phosphorylated by PTK6 and SRC. Tyrosine phosphorylated by SRC during mitosis. In terms of tissue distribution, expressed in the cortex, cerebellum, striatum, midbrain, brainstem and thalamus of the brain (at protein level). Expressed in neurons (at protein level). Expressed in brain and testis. Expressed in the dentate gyrus of the hippocampus.

The protein resides in the nucleus. RNA-binding protein that plays a role in the regulation of alternative splicing and influences mRNA splice site selection and exon inclusion. Its phosphorylation by FYN inhibits its ability to regulate splice site selection. Induces an increased concentration-dependent incorporation of exon in CD44 pre-mRNA by direct binding to purine-rich exonic enhancer. May function as an adapter protein for Src kinases during mitosis. Binds both poly(A) and poly(U) homopolymers. Phosphorylation by PTK6 inhibits its RNA-binding ability. The protein is KH domain-containing, RNA-binding, signal transduction-associated protein 2 (Khdrbs2) of Rattus norvegicus (Rat).